The sequence spans 898 residues: Histone-lysine N-methyltransferase mes-4 (898 aa).

Residues M1–D68 are disordered. The span at Q36–N51 shows a compositional bias: polar residues. 2 consecutive PHD-type zinc fingers follow at residues D126–D214 and I303–G355. One can recognise an SET domain in the interval E537–N665. A Post-SET domain is found at N671 to G687. The disordered stretch occupies residues A689–K847. Residues E692–A704 show a composition bias toward basic and acidic residues. Residues K705–N719 show a composition bias toward basic residues. Low complexity-rich tracts occupy residues I737–S751 and S761–Q773. Positions P774–L788 are enriched in polar residues. Over residues S802–S811 the composition is skewed to low complexity.

This sequence belongs to the class V-like SAM-binding methyltransferase superfamily. Histone-lysine methyltransferase family. SET2 subfamily. In terms of tissue distribution, in adults, it is predominantly expressed in the germline, and weakly expressed in intestinal cells.

Its subcellular location is the nucleus. It is found in the chromosome. The catalysed reaction is L-lysyl(36)-[histone H3] + 2 S-adenosyl-L-methionine = N(6),N(6)-dimethyl-L-lysyl(36)-[histone H3] + 2 S-adenosyl-L-homocysteine + 2 H(+). Histone methyltransferase. Dimethylates 'Lys-36' of histone H3, a specific tag for epigenetic transcriptional activation. Plays a central role in early development and is responsible for all H3 'Lys-36' dimethylation until about the 40-cell stage. Indirectly involved in the global inactivation of the X chromosomes in germline cells, possibly by excluding the mes-2-mes-3-mes-6 repressive Polycomb complex from the autosomes. Not related to transcription elongation. Required for small-RNA-induced H3K27 trimethylation. May suppress sensitivity to RNAi. May regulate the expression of genes required for vulval development. The protein is Histone-lysine N-methyltransferase mes-4 of Caenorhabditis elegans.